Consider the following 375-residue polypeptide: Palmitoyltransferase PFA4 (375 aa).

Over 1-9 (MAVLVKWPW) the chain is Cytoplasmic. Residues 10–30 (LGVAIPCFLISFTGYFAHFFV) traverse the membrane as a helical segment. The Lumenal portion of the chain corresponds to 31-33 (LTN). Residues 34–54 (FLSFKELLWFQVSLSMIWISY) form a helical membrane-spanning segment. The Cytoplasmic segment spans residues 55 to 121 (WKAIYKNPGR…MNCVGYKNFP (67 aa)). The 51-residue stretch at 78–128 (NYCTKCETYKPERTHHCKRCNQCVLVMDHHCPWTMNCVGYKNFPHFIRFLF) folds into the DHHC domain. Cysteine 108 acts as the S-palmitoyl cysteine intermediate in catalysis. A helical membrane pass occupies residues 122–142 (HFIRFLFWIIATTGILLHYFV). Over 143 to 164 (KRIKFTWVNRYATANLVSKQEL) the chain is Lumenal. Residues 165–185 (IFLTILTPLDAFILLTISLLF) form a helical membrane-spanning segment. At 186–375 (VRCVKNQIVN…EHFGVDVEVE (190 aa)) the chain is on the cytoplasmic side.

Belongs to the DHHC palmitoyltransferase family. PFA4 subfamily.

It localises to the endoplasmic reticulum membrane. The catalysed reaction is L-cysteinyl-[protein] + hexadecanoyl-CoA = S-hexadecanoyl-L-cysteinyl-[protein] + CoA. Functionally, mediates the reversible addition of palmitate to target proteins, thereby regulating their membrane association and biological function. The polypeptide is Palmitoyltransferase PFA4 (Eremothecium gossypii (strain ATCC 10895 / CBS 109.51 / FGSC 9923 / NRRL Y-1056) (Yeast)).